The sequence spans 188 residues: dTTP/UTP pyrophosphatase (188 aa).

D67 (proton acceptor) is an active-site residue.

Belongs to the Maf family. YhdE subfamily. It depends on a divalent metal cation as a cofactor.

Its subcellular location is the cytoplasm. The enzyme catalyses dTTP + H2O = dTMP + diphosphate + H(+). The catalysed reaction is UTP + H2O = UMP + diphosphate + H(+). Functionally, nucleoside triphosphate pyrophosphatase that hydrolyzes dTTP and UTP. May have a dual role in cell division arrest and in preventing the incorporation of modified nucleotides into cellular nucleic acids. The sequence is that of dTTP/UTP pyrophosphatase from Roseobacter denitrificans (strain ATCC 33942 / OCh 114) (Erythrobacter sp. (strain OCh 114)).